We begin with the raw amino-acid sequence, 202 residues long: Dephospho-CoA kinase (202 aa).

The region spanning 6-202 is the DPCK domain; that stretch reads KISVTGDPSS…QCFKALKGTI (197 aa). Position 14 to 19 (14 to 19) interacts with ATP; the sequence is SSGKTE.

It belongs to the CoaE family.

The protein resides in the cytoplasm. It catalyses the reaction 3'-dephospho-CoA + ATP = ADP + CoA + H(+). It functions in the pathway cofactor biosynthesis; coenzyme A biosynthesis; CoA from (R)-pantothenate: step 5/5. Its function is as follows. Catalyzes the phosphorylation of the 3'-hydroxyl group of dephosphocoenzyme A to form coenzyme A. The chain is Dephospho-CoA kinase from Chlamydia muridarum (strain MoPn / Nigg).